We begin with the raw amino-acid sequence, 908 residues long: MRFATTQLATLACFILTAEATFPLRGLFNDAPVDVDLGVYHEESGNNKEQKVDGFNMSPNIKKRTNENNAANVVSTNGGLFITSTKELKTTVVVTSCFNNVCSETSITTPKTAVTATTSKHSTSKPTYTTTSKHSTSHSSTPASTSKHSTSTSTHPATSEHSTSKSTHATSSKHSTSKSSVSVTTSKHSTHDTTSKSFVTPPASSTTSEHTKHKSHKPSKTVVTLTSCSNNACSQSEITTGAIVVTDKETVYTTYCPLTDTETETESTTATTSKHSTHTTTSKHSSVESTSVTSSSKHSVSKSTDVTTSKHSSSESSHATTMKHSTSKHSTHATTSKHSTTESTSGITSKHSTHATSSKYSTVESSSSFASTSESSVPVSSSKSTTFESSISTTTSKHLTLKSSTPASTLEYSTSIPPAPATTSNSLSTKSTTLTTISRSSTSGSSVPNTTRESSTSTTTPNSSSSESKVSSAIPKYSSSEVSSSATTLKSYSTTHSIPTTLVYSSSTSLGFSVTEFRNLTTTSKSSLSTSTTELLTSGTTVRSSTSESSVTSATSIYTSSESTTSSESTTSIETPKSIASKSSSSVTLPKSSTFAWSTSTTTPESSPITLKLSTSKPPKPSATMESSASTTKNSSIQSTSEATTSGSSGVESSVLTATTKSSVPVTTSEWSSVVTTPKSSAPNTTLEHSTSASETSSGSVYTTFDQSTTVITVTSCSDNLCSKTEVTTGVTVITSDTTSYTTYCPLTGTTTVSSALESLVTANKSTSYVGATPIVSSVVSTTPIISSASTTPIISSASTTSVISSASTTSVISNAISNPVSTDVKPTTSSQGTKSTPVDTDSKSTSETTVMVYTTKSVTPTTVESISVAVSSAAQSSIAAISSYEGTGNNMKLSFGVVIAGVAAFAI.

Residues 1 to 20 form the signal peptide; sequence MRFATTQLATLACFILTAEA. Composition is skewed to low complexity over residues 110 to 187, 266 to 324, and 332 to 405; these read PKTA…TTSK, ESTT…TMKH, and HATT…KSST. 2 disordered regions span residues 110 to 221 and 263 to 477; these read PKTA…PSKT and TETE…IPKY. Residues 406–416 are compositionally biased toward polar residues; that stretch reads PASTLEYSTSI. A compositionally biased stretch (low complexity) spans 422–477; sequence TTSNSLSTKSTTLTTISRSSTSGSSVPNTTRESSTSTTTPNSSSSESKVSSAIPKY. 3 N-linked (GlcNAc...) asparagine glycosylation sites follow: Asn449, Asn462, and Asn519. Residues 539–608 are compositionally biased toward low complexity; the sequence is GTTVRSSTSE…TSTTTPESSP (70 aa). Residues 539–700 are disordered; that stretch reads GTTVRSSTSE…TSASETSSGS (162 aa). Polar residues predominate over residues 624–638; that stretch reads TMESSASTTKNSSIQ. N-linked (GlcNAc...) asparagine glycosylation is present at Asn634. Low complexity-rich tracts occupy residues 639–655 and 662–677; these read STSE…ESSV and SSVP…VVTT. Asn684 is a glycosylation site (N-linked (GlcNAc...) asparagine). Residues 685–700 show a composition bias toward low complexity; that stretch reads TTLEHSTSASETSSGS. Residue Asn764 is glycosylated (N-linked (GlcNAc...) asparagine). The segment at 821 to 844 is disordered; that stretch reads VSTDVKPTTSSQGTKSTPVDTDSK. Gly887 carries GPI-anchor amidated glycine lipidation. Positions 888–908 are cleaved as a propeptide — removed in mature form; that stretch reads TGNNMKLSFGVVIAGVAAFAI.

In terms of processing, the GPI-anchor is attached to the protein in the endoplasmic reticulum and serves to target the protein to the cell surface. There, the glucosamine-inositol phospholipid moiety is cleaved off and the GPI-modified mannoprotein is covalently attached via its lipidless GPI glycan remnant to the 1,6-beta-glucan of the outer cell wall layer.

It is found in the secreted. Its subcellular location is the cell wall. It localises to the membrane. Its function is as follows. GPI-anchored cell wall protein required for mating efficiency, biofilm formation, adhesion, filamentous growth, and oxidative stress tolerance. Involved in normal disseminated infection in a mouse systemic candidiasis model. This chain is Hyphal wall protein 2 (HWP2), found in Candida albicans (strain SC5314 / ATCC MYA-2876) (Yeast).